The chain runs to 337 residues: MSTEVSEAQARRAVADIFNSTLASSAIGAAWELGALDELRENGKLDVSDFAVRHDLHEPAVVGMFTALASVGIVRREGATVVVGPYFDEANHHRSLFHWLNQGSGELFRRMPQVLPNENRTGKFYQRDAGAISYACREISERYFDPAFWAAVDGLGYTPTTVADLGSGSGERLIQIARRFPGVRGLGVDIADGAIAMAEKEVAAKGFGDQISFVRGDARTIDQVSARGEFAEVDLLTCFMMGHDFWPRENCVQTLRKLRAAFPNVRRFLLGDATRTVGIPDRELPVFTLGFEFGHDMMGVYLPTLDEWDGVFEEGGWRCVKKHAIDSLSVSVVFELE.

It belongs to the methyltransferase superfamily.

It carries out the reaction 3-phenylpyruvate + S-adenosyl-L-methionine = (3S)-2-oxo-3-phenylbutanoate + S-adenosyl-L-homocysteine + H(+). It functions in the pathway antibiotic biosynthesis. S-adenosyl-L-methionine-dependent methyltransferase involved in synthesis of the nonproteinogenic amino acid (2S,3S)-beta-methyl-phenylalanine, a building block of the antibiotic mannopeptimycin. The polypeptide is Phenylpyruvate C(3)-methyltransferase (mppJ) (Streptomyces hygroscopicus).